Here is a 473-residue protein sequence, read N- to C-terminus: MKIKTRFAPSPTGYLHVGGARTALYSWLFARHLGGEFLLRIEDTDLERSTQPAIDAIMDGMNWLNLDWDEGPYFQTKRFDRYNAVIDDMLSKGTAYHCYCSKERLETLREAQMARGEKPRYDGRCRDSHEHHADDEPCVVRFRNPQDGSVVFNDLIRGPIEFSNQELDDLIIRRIDGSPTYNFCVVVDDFDMAITHVIRGEDHINNTPRQINILKALGAPVPAYAHVSMILGDDGKKLSKRHGAVGVMQYRDDGFLPEALLNYLVRLGWSHGDQEIFSVDEMKQLFSFEAVSKSASAFNTEKLLWLNHHYINHLPADYVATHLVLHIEQQGIDTRTGPQLAALVKLLGERCKTLKEIAASCRYFYEDFSEFDADAAKKHLRPVAVLALEAVRANLAALSEWTPATVHAAIEQTAEALQVGMGKVGMPLRVAVTGTGQSPALDVTVHAIGQSRCLARIVKALDFIACRTQESAG.

Positions 9-19 match the 'HIGH' region motif; it reads PSPTGYLHVGG. Positions 98, 100, 125, and 127 each coordinate Zn(2+). The 'KMSKS' region motif lies at 237–241; that stretch reads KLSKR. Lys-240 contacts ATP.

Belongs to the class-I aminoacyl-tRNA synthetase family. Glutamate--tRNA ligase type 1 subfamily. Monomer. Zn(2+) serves as cofactor.

Its subcellular location is the cytoplasm. It catalyses the reaction tRNA(Glu) + L-glutamate + ATP = L-glutamyl-tRNA(Glu) + AMP + diphosphate. Functionally, catalyzes the attachment of glutamate to tRNA(Glu) in a two-step reaction: glutamate is first activated by ATP to form Glu-AMP and then transferred to the acceptor end of tRNA(Glu). This Sodalis glossinidius (strain morsitans) protein is Glutamate--tRNA ligase.